Consider the following 60-residue polypeptide: Large ribosomal subunit protein bL32 (60 aa).

The segment covering 1–23 has biased composition (basic residues); that stretch reads MAKHPVPKKKTSKSKRDMRRSHH. Residues 1–26 are disordered; that stretch reads MAKHPVPKKKTSKSKRDMRRSHHALT.

The protein belongs to the bacterial ribosomal protein bL32 family.

The sequence is that of Large ribosomal subunit protein bL32 from Deinococcus deserti (strain DSM 17065 / CIP 109153 / LMG 22923 / VCD115).